The sequence spans 20 residues: Apidaecin 3+ (20 aa).

The interval 1 to 20 is disordered; that stretch reads GKPSRPRPAPIQPRPPHPRL.

Belongs to the apidaecin family.

It is found in the secreted. In terms of biological role, antimicrobial peptide active against many Gram-negative enterobacterial and plant-associated bacterial species. Not active against other bacterial species like H.pylori, P.mirabilis, B.pertussis or N.gonorrhoeae. Among others, also active against S.typhi. Its function is as follows. Not active against S.typhi. In Pimpla disparis (Parasitic wasp), this protein is Apidaecin 3+.